A 330-amino-acid chain; its full sequence is Free fatty acid receptor 2 (330 aa).

At 1–8 (MTPDWHSS) the chain is on the extracellular side. The chain crosses the membrane as a helical span at residues 9–29 (LILTAYILIFLTGLPANLLAL). Topologically, residues 30 to 43 (RAFMGRVRQPQPAP) are cytoplasmic. A helical transmembrane segment spans residues 44-64 (VHILLLNLTLADLLLLLLLPF). The Extracellular segment spans residues 65 to 79 (RIVEAASNFRWYLPK). Residues 80 to 100 (IVCALTGFGFYSSIYCSTWLL) traverse the membrane as a helical segment. Residues 101 to 126 (AGISMERYLGVAFPVQYKLSRRPLYG) lie on the Cytoplasmic side of the membrane. The helical transmembrane segment at 127–147 (VIAALVAWIMSFGHCTIVIIV) threads the bilayer. Topologically, residues 148–184 (QYLNSTEQVGTENQITCYENFTQEQLDVVLPVRLELC) are extracellular. N151 and N167 each carry an N-linked (GlcNAc...) asparagine glycan. A helical membrane pass occupies residues 185 to 205 (LVLFFVPMAVTIFCYWRFVWI). At 206–219 (MLTQPHVGAQRRRR) the chain is on the cytoplasmic side. A helical transmembrane segment spans residues 220–240 (AVGLAVVTLLNFLVCFGPYNM). The Extracellular segment spans residues 241 to 255 (SHLVGFYLRQSPSWR). The chain crosses the membrane as a helical span at residues 256–276 (VEAVVFSSLNASLDPLLFYFS). The Cytoplasmic portion of the chain corresponds to 277-330 (SSVVRRAFGKGLLLIRNPASSMLGRGAKETVEGTKMDRGGSQAEGVQSSEFVTE). Positions 306 to 330 (TVEGTKMDRGGSQAEGVQSSEFVTE) are disordered. Polar residues predominate over residues 320–330 (EGVQSSEFVTE).

The protein belongs to the G-protein coupled receptor 1 family. In terms of assembly, interacts with FCN1 (via Fibrinogen C-terminal domain). As to expression, highly expressed in hematopoietic tissues, such as spleen and bone marrow, with highest levels in a subset of immune cells, including monocytes or neutrophils. Expressed in adipose tissues with high expression in differentiating adipocytes. Expressed by intestinal endocrine cells.

It localises to the cell membrane. Functionally, g protein-coupled receptor that is activated by a major product of dietary fiber digestion, the short chain fatty acids (SCFAs), and that plays a role in the regulation of whole-body energy homeostasis and in intestinal immunity. In omnivorous mammals, the short chain fatty acids acetate, propionate and butyrate are produced primarily by the gut microbiome that metabolizes dietary fibers. SCFAs serve as a source of energy but also act as signaling molecules. That G protein-coupled receptor is probably coupled to the pertussis toxin-sensitive, G(i/o)-alpha family of G proteins but also to the Gq family. Its activation results in the formation of inositol 1,4,5-trisphosphate, the mobilization of intracellular calcium, the phosphorylation of the MAPK3/ERK1 and MAPK1/ERK2 kinases and the inhibition of intracellular cAMP accumulation. May play a role in glucose homeostasis by regulating the secretion of GLP-1, in response to short-chain fatty acids accumulating in the intestine. May also regulate the production of LEP/Leptin, a hormone acting on the central nervous system to inhibit food intake. Finally, may also regulate whole-body energy homeostasis through adipogenesis regulating both differentiation and lipid storage of adipocytes. In parallel to its role in energy homeostasis, may also mediate the activation of the inflammatory and immune responses by SCFA in the intestine, regulating the rapid production of chemokines and cytokines. May also play a role in the resolution of the inflammatory response and control chemotaxis in neutrophils. In addition to SCFAs, may also be activated by the extracellular lectin FCN1 in a process leading to activation of monocytes and inducing the secretion of interleukin-8/IL-8 in response to the presence of microbes. In Mus musculus (Mouse), this protein is Free fatty acid receptor 2 (Ffar2).